Reading from the N-terminus, the 720-residue chain is Transcription factor bHLH155 (720 aa).

Positions 522–534 (YPSSSSDQFQTSL) are enriched in polar residues. The disordered stretch occupies residues 522 to 558 (YPSSSSDQFQTSLDIPKKNKKRAKPGESSRPRPRDRQ). A Nuclear localization signal motif is present at residues 540–547 (NKKRAKPG). A bHLH domain is found at 544 to 593 (AKPGESSRPRPRDRQLIQDRIKELRELVPNGSKCSIDSLLERTIKHMLFL). Residues 545 to 558 (KPGESSRPRPRDRQ) show a composition bias toward basic and acidic residues.

This sequence belongs to the bHLH protein family. LHW subfamily. In terms of assembly, homodimer.

The protein resides in the nucleus. Its function is as follows. Transcription factor that may regulate root development. This Arabidopsis thaliana (Mouse-ear cress) protein is Transcription factor bHLH155 (BHLH155).